The following is a 397-amino-acid chain: Tryptophan synthase beta chain (397 aa).

K91 bears the N6-(pyridoxal phosphate)lysine mark.

Belongs to the TrpB family. As to quaternary structure, tetramer of two alpha and two beta chains. It depends on pyridoxal 5'-phosphate as a cofactor.

The enzyme catalyses (1S,2R)-1-C-(indol-3-yl)glycerol 3-phosphate + L-serine = D-glyceraldehyde 3-phosphate + L-tryptophan + H2O. Its pathway is amino-acid biosynthesis; L-tryptophan biosynthesis; L-tryptophan from chorismate: step 5/5. In terms of biological role, the beta subunit is responsible for the synthesis of L-tryptophan from indole and L-serine. The sequence is that of Tryptophan synthase beta chain from Bacillus cereus (strain AH187).